Consider the following 350-residue polypeptide: Phosphate acyltransferase (350 aa).

The protein belongs to the PlsX family. As to quaternary structure, homodimer. Probably interacts with PlsY.

Its subcellular location is the cytoplasm. The catalysed reaction is a fatty acyl-[ACP] + phosphate = an acyl phosphate + holo-[ACP]. Its pathway is lipid metabolism; phospholipid metabolism. Its function is as follows. Catalyzes the reversible formation of acyl-phosphate (acyl-PO(4)) from acyl-[acyl-carrier-protein] (acyl-ACP). This enzyme utilizes acyl-ACP as fatty acyl donor, but not acyl-CoA. The polypeptide is Phosphate acyltransferase (Magnetococcus marinus (strain ATCC BAA-1437 / JCM 17883 / MC-1)).